The primary structure comprises 536 residues: GMP synthase [glutamine-hydrolyzing] (536 aa).

Positions 4–206 (KILILDFGSQ…VLDICGARAD (203 aa)) constitute a Glutamine amidotransferase type-1 domain. Cys85 acts as the Nucleophile in catalysis. Active-site residues include His180 and Glu182. One can recognise a GMPS ATP-PPase domain in the interval 207 to 404 (WIMGDYISEA…LGLPYHMVYR (198 aa)). 234-240 (SGGVDSS) contributes to the ATP binding site.

As to quaternary structure, homodimer.

It catalyses the reaction XMP + L-glutamine + ATP + H2O = GMP + L-glutamate + AMP + diphosphate + 2 H(+). Its pathway is purine metabolism; GMP biosynthesis; GMP from XMP (L-Gln route): step 1/1. Catalyzes the synthesis of GMP from XMP. The chain is GMP synthase [glutamine-hydrolyzing] from Albidiferax ferrireducens (strain ATCC BAA-621 / DSM 15236 / T118) (Rhodoferax ferrireducens).